Consider the following 315-residue polypeptide: MQTKLLAIMLAAPVVFSSQEASASDFFGPEKISTEINLGTLSGKTKERVYEPEEGGRKVSQLDWKYSNAAILKGAVNWELNPWLSVGAAGWTTLNSRGGNMVDQDWMDSGTPGTWTDESRHPDTRLNYANEFDLNVKGWFLKESDYRLAIMAGYQESRYSFNATGGTYIYSENGGFRNETGALPDKIKVIGYKQHFKIPYVGLTGNYRYDNFEFGGAFKYSGWVRGSDNDEHYVRQTTFRSKVINQNYYSVAVNAGYYITPEAKVYIEGVWSRLTNKKGDTSLYDRSDNTSEHNNNGAGIENYNFITTAGLKYTF.

The N-terminal stretch at 1–23 is a signal peptide; it reads MQTKLLAIMLAAPVVFSSQEASA. Catalysis depends on residues D103, D105, D230, and H232.

Belongs to the peptidase A26 family.

The protein localises to the cell outer membrane. Protease; also acts as a receptor for bacteriophage Ox2. In Escherichia coli (strain K12), this protein is Outer membrane protease OmpP (ompP).